A 490-amino-acid polypeptide reads, in one-letter code: Glutamyl-tRNA(Gln) amidotransferase subunit A (490 aa).

Residues Lys76 and Ser151 each act as charge relay system in the active site. The Acyl-ester intermediate role is filled by Ser175.

Belongs to the amidase family. GatA subfamily. As to quaternary structure, heterotrimer of A, B and C subunits.

It catalyses the reaction L-glutamyl-tRNA(Gln) + L-glutamine + ATP + H2O = L-glutaminyl-tRNA(Gln) + L-glutamate + ADP + phosphate + H(+). Its function is as follows. Allows the formation of correctly charged Gln-tRNA(Gln) through the transamidation of misacylated Glu-tRNA(Gln) in organisms which lack glutaminyl-tRNA synthetase. The reaction takes place in the presence of glutamine and ATP through an activated gamma-phospho-Glu-tRNA(Gln). This is Glutamyl-tRNA(Gln) amidotransferase subunit A from Aromatoleum aromaticum (strain DSM 19018 / LMG 30748 / EbN1) (Azoarcus sp. (strain EbN1)).